The following is a 636-amino-acid chain: DNA mismatch repair protein MutL (636 aa).

Residues 332–344 are compositionally biased toward basic and acidic residues; that stretch reads HAGEQGDSLRTDI. Disordered regions lie at residues 332-360 and 417-443; these read HAGE…PADN and ASAP…SDDA. Low complexity predominate over residues 417–437; sequence ASAPADAAPAQASEPAAAPQA.

It belongs to the DNA mismatch repair MutL/HexB family.

Its function is as follows. This protein is involved in the repair of mismatches in DNA. It is required for dam-dependent methyl-directed DNA mismatch repair. May act as a 'molecular matchmaker', a protein that promotes the formation of a stable complex between two or more DNA-binding proteins in an ATP-dependent manner without itself being part of a final effector complex. The protein is DNA mismatch repair protein MutL of Ralstonia nicotianae (strain ATCC BAA-1114 / GMI1000) (Ralstonia solanacearum).